The sequence spans 1125 residues: tRNA (34-2'-O)-methyltransferase regulator WDR6 (1125 aa).

Met-1 carries the N-acetylmethionine modification. WD repeat units lie at residues 53–97, 105–143, 147–189, 200–238, 247–285, 289–327, 335–376, 381–422, 425–470, 476–520, 559–598, 604–642, 645–684, 739–785, 848–897, 905–950, 974–1016, 1040–1077, and 1083–1125; these read VKRV…VVKV, RELWRSGLWNMSDWIWDVRWIEGNVAVALGHNSVVLYDP, CMLQ…IWYP, APDRRVSGHVGVIFSMSYLESKGLLATASEDRSVRLWKV, RVQNIGHCFGHSARVWQVKLLENYLISAGEDCVCLVWSH, ILQAFRGHRGRGIRAIATHERQAWVVTGGDDSGIRLWHL, LGVS…LYDL, WEQL…VVPI, PTAA…ISAA, IFVK…LFPV, PVSTLHSLHGKQGVTSVTCHGGYLYSTGRDSSYFQLFVHG, VLRQKACRGMNWVAGLRMVPDGSMVILGFHANEFVVWSP, HEKLHIVNCGGGHRSWAFSDTEAAMAFTYLKDGEVMLYRA, LIDI…VWAV, RNKH…LFLL, HLLA…FWDL, GTPS…VFTL, EEYSVPCAHAAHVTGVKILSPKLMVSASIDQRLTFWRL, and TFMN…NWYD.

It belongs to the WD repeat WDR6 family. In terms of assembly, interacts with FTSJ1; the interaction is direct, and required for 2'-O-methylation of position 34 in substrate tRNAs. Interacts with IRS4. Interacts with STK11/LKB1.

Its subcellular location is the cytoplasm. In terms of biological role, together with methyltransferase FTSJ1, methylates the 2'-O-ribose of nucleotides at position 34 of the tRNA anticodon loop of substrate tRNAs. Required for the correct positioning of the substrate tRNA for methylation. Required to suppress amino acid starvation-induced autophagy. Enhances the STK11/LKB1-induced cell growth suppression activity. The sequence is that of tRNA (34-2'-O)-methyltransferase regulator WDR6 (Wdr6) from Mus musculus (Mouse).